Reading from the N-terminus, the 440-residue chain is Virion host shutoff protein (440 aa).

2 disordered regions span residues 98–144 (NIDH…RRKT) and 265–312 (IDEP…AGPG). Residues 266–281 (DEPPAASEESSASDQQ) show a composition bias toward low complexity.

It belongs to the herpesviridae VHS protein family.

The protein localises to the virion. Functionally, minor structural protein that acts as an endoribonuclease during lytic infection. Degrades host mRNAs in the cytoplasm by cutting them at preferred sites, including some in regions of translation initiation. The polypeptide is Virion host shutoff protein (UL41) (Amazona oratrix (yellow-headed parrot)).